A 99-amino-acid chain; its full sequence is A-type ATP synthase subunit F (99 aa).

It belongs to the V-ATPase F subunit family. As to quaternary structure, has multiple subunits with at least A(3), B(3), C, D, E, F, H, I and proteolipid K(x).

The protein localises to the cell membrane. In terms of biological role, component of the A-type ATP synthase that produces ATP from ADP in the presence of a proton gradient across the membrane. This Methanocella arvoryzae (strain DSM 22066 / NBRC 105507 / MRE50) protein is A-type ATP synthase subunit F.